Consider the following 449-residue polypeptide: 23S rRNA (uracil(1939)-C(5))-methyltransferase RlmD (449 aa).

The TRAM domain occupies 15 to 73 (KAIPAKNLTVTVTSLDPFGQGVARHEGKTVFVTGVLPGEQAEVQLTEDKRQFSHAKLKR). C86, C92, C95, and C173 together coordinate [4Fe-4S] cluster. Positions 276, 305, 310, 326, 353, and 374 each coordinate S-adenosyl-L-methionine. C400 functions as the Nucleophile in the catalytic mechanism.

It belongs to the class I-like SAM-binding methyltransferase superfamily. RNA M5U methyltransferase family. RlmD subfamily.

It catalyses the reaction uridine(1939) in 23S rRNA + S-adenosyl-L-methionine = 5-methyluridine(1939) in 23S rRNA + S-adenosyl-L-homocysteine + H(+). Functionally, catalyzes the formation of 5-methyl-uridine at position 1939 (m5U1939) in 23S rRNA. The polypeptide is 23S rRNA (uracil(1939)-C(5))-methyltransferase RlmD (Pectobacterium carotovorum subsp. carotovorum (strain PC1)).